Consider the following 182-residue polypeptide: Ribosome maturation factor RimM (182 aa).

The region spanning 102–182 is the PRC barrel domain; it reads EEDDYYWKDL…RVEVDWDPGF (81 aa).

It belongs to the RimM family. Binds ribosomal protein uS19.

It localises to the cytoplasm. Functionally, an accessory protein needed during the final step in the assembly of 30S ribosomal subunit, possibly for assembly of the head region. Essential for efficient processing of 16S rRNA. May be needed both before and after RbfA during the maturation of 16S rRNA. It has affinity for free ribosomal 30S subunits but not for 70S ribosomes. The sequence is that of Ribosome maturation factor RimM from Yersinia pseudotuberculosis serotype IB (strain PB1/+).